The primary structure comprises 809 residues: Leucine--tRNA ligase (809 aa).

The short motif at 40-50 (PYPSGRIHMGH) is the 'HIGH' region element. Residues 579-583 (KMSKS) carry the 'KMSKS' region motif. K582 lines the ATP pocket.

It belongs to the class-I aminoacyl-tRNA synthetase family.

It localises to the cytoplasm. The catalysed reaction is tRNA(Leu) + L-leucine + ATP = L-leucyl-tRNA(Leu) + AMP + diphosphate. The chain is Leucine--tRNA ligase from Campylobacter jejuni (strain RM1221).